A 263-amino-acid polypeptide reads, in one-letter code: Small ribosomal subunit protein eS1 (263 aa).

Basic and acidic residues predominate over residues 235–254; sequence HGEGGGGKREAGDKSERPEG. Residues 235-263 form a disordered region; the sequence is HGEGGGGKREAGDKSERPEGYEPPVQESV.

This sequence belongs to the eukaryotic ribosomal protein eS1 family. As to quaternary structure, component of the small ribosomal subunit. Mature ribosomes consist of a small (40S) and a large (60S) subunit. The 40S subunit contains about 33 different proteins and 1 molecule of RNA (18S). The 60S subunit contains about 49 different proteins and 3 molecules of RNA (28S, 5.8S and 5S).

Its subcellular location is the cytoplasm. This is Small ribosomal subunit protein eS1 from Bombyx mandarina (Wild silk moth).